The sequence spans 796 residues: Transcription factor kayak (796 aa).

Disordered stretches follow at residues 109–132 (AYQQ…SNTS), 315–341 (VVNN…SNTV), 374–429 (FNCG…GSNG), and 442–490 (VGSA…RNKL). Over residues 402–429 (TTDTSSAATDSTSYQNGGHMFGNNGSNG) the composition is skewed to low complexity. The segment covering 447 to 457 (RGTSSTSNNAT) has biased composition (polar residues). The bZIP domain occupies 478–541 (EEKRRVRRER…HQLNFVLEAH (64 aa)). Residues 480-499 (KRRVRRERNKLAAARCRKRR) are basic motif. The segment at 506-534 (LSEEVDGLLKKNEDLKKEIEILTNTRHQL) is leucine-zipper. The segment at 569–601 (SSGSNGSHHHNSNSNNSNNNNSNNNNNSNSNDS) is disordered. Phosphoserine is present on Ser-621. Disordered regions lie at residues 642 to 661 (PHDA…PPAA) and 774 to 796 (SSQN…LVSL).

The protein belongs to the bZIP family. Fos subfamily. As to quaternary structure, homodimer. Heterodimer with Jra. The kay-Jra heterodimer binds more stably to the AP-1 site than either of the two proteins alone.

Its subcellular location is the nucleus. Developmentally regulated transcription factor AP-1 binds and recognizes the enhancer DNA sequence: 5'-TGA[CG]TCA-3'. May play a role in the function or determination of a particular subset of cells in the developing embryo. It is able to carry out its function either independently of or in conjunction with Jra. The polypeptide is Transcription factor kayak (Drosophila grimshawi (Hawaiian fruit fly)).